A 292-amino-acid chain; its full sequence is Cytidine deaminase (292 aa).

CMP/dCMP-type deaminase domains lie at 47-167 (TPLK…FGPK) and 186-292 (DHQD…YYSL). 88–90 (NQE) serves as a coordination point for substrate. A Zn(2+)-binding site is contributed by H101. E103 (proton donor) is an active-site residue. Positions 128 and 131 each coordinate Zn(2+).

It belongs to the cytidine and deoxycytidylate deaminase family. As to quaternary structure, homodimer. Requires Zn(2+) as cofactor.

It catalyses the reaction cytidine + H2O + H(+) = uridine + NH4(+). The catalysed reaction is 2'-deoxycytidine + H2O + H(+) = 2'-deoxyuridine + NH4(+). This enzyme scavenges exogenous and endogenous cytidine and 2'-deoxycytidine for UMP synthesis. The protein is Cytidine deaminase of Haemophilus influenzae (strain 86-028NP).